A 633-amino-acid polypeptide reads, in one-letter code: uncharacterized protein (633 aa).

The segment at 12 to 43 (ESGTNNYSDTIANGNTLPPRSKKGHSGRRKRS) is disordered. A compositionally biased stretch (polar residues) spans 13–29 (SGTNNYSDTIANGNTLP). Basic residues predominate over residues 31 to 42 (RSKKGHSGRRKR). 2 helical membrane passes run 99–118 (ILFG…SSAL) and 217–233 (NCAF…ITAC). A disordered region spans residues 593 to 612 (DAETNKATGSAKSENIETKS).

It is found in the membrane. This is an uncharacterized protein from Saccharomyces cerevisiae (strain ATCC 204508 / S288c) (Baker's yeast).